Here is a 122-residue protein sequence, read N- to C-terminus: Large ribosomal subunit protein bL19c (122 aa).

Belongs to the bacterial ribosomal protein bL19 family.

The protein localises to the plastid. It localises to the chloroplast. This chain is Large ribosomal subunit protein bL19c, found in Gracilaria tenuistipitata var. liui (Red alga).